A 305-amino-acid chain; its full sequence is Sulfate adenylyltransferase subunit 2 (305 aa).

It belongs to the PAPS reductase family. CysD subfamily. Heterodimer composed of CysD, the smaller subunit, and CysN.

The enzyme catalyses sulfate + ATP + H(+) = adenosine 5'-phosphosulfate + diphosphate. The protein operates within sulfur metabolism; hydrogen sulfide biosynthesis; sulfite from sulfate: step 1/3. Functionally, with CysN forms the ATP sulfurylase (ATPS) that catalyzes the adenylation of sulfate producing adenosine 5'-phosphosulfate (APS) and diphosphate, the first enzymatic step in sulfur assimilation pathway. APS synthesis involves the formation of a high-energy phosphoric-sulfuric acid anhydride bond driven by GTP hydrolysis by CysN coupled to ATP hydrolysis by CysD. The protein is Sulfate adenylyltransferase subunit 2 of Ectopseudomonas mendocina (strain ymp) (Pseudomonas mendocina).